A 122-amino-acid chain; its full sequence is Large ribosomal subunit protein uL14 (122 aa).

It belongs to the universal ribosomal protein uL14 family. In terms of assembly, part of the 50S ribosomal subunit. Forms a cluster with proteins L3 and L19. In the 70S ribosome, L14 and L19 interact and together make contacts with the 16S rRNA in bridges B5 and B8.

Its function is as follows. Binds to 23S rRNA. Forms part of two intersubunit bridges in the 70S ribosome. In Cutibacterium acnes (strain DSM 16379 / KPA171202) (Propionibacterium acnes), this protein is Large ribosomal subunit protein uL14.